The following is an 804-amino-acid chain: Phenylalanine--tRNA ligase beta subunit (804 aa).

Residues 39–155 form the tRNA-binding domain; it reads EEGLKKLVVG…ADVKPGQDVY (117 aa). The B5 domain occupies 408–483; the sequence is REPVVVKTTV…RIYGYDNLKS (76 aa). Positions 461, 467, 470, and 471 each coordinate Mg(2+). The region spanning 711–804 is the FDX-ACB domain; sequence PKFPAIERDL…LENDLDIKVR (94 aa).

It belongs to the phenylalanyl-tRNA synthetase beta subunit family. Type 1 subfamily. As to quaternary structure, tetramer of two alpha and two beta subunits. Mg(2+) is required as a cofactor.

It is found in the cytoplasm. It carries out the reaction tRNA(Phe) + L-phenylalanine + ATP = L-phenylalanyl-tRNA(Phe) + AMP + diphosphate + H(+). The protein is Phenylalanine--tRNA ligase beta subunit of Lactobacillus acidophilus (strain ATCC 700396 / NCK56 / N2 / NCFM).